Consider the following 573-residue polypeptide: Anti-Muellerian hormone type-2 receptor (573 aa).

The first 17 residues, 1–17 (MLGSLGLWALLPTAVEA), serve as a signal peptide directing secretion. Residues 18-149 (PPNRRTCVFF…APGESIWMAL (132 aa)) lie on the Extracellular side of the membrane. 2 disulfide bridges follow: cysteine 55/cysteine 79 and cysteine 92/cysteine 109. Asparagine 66 carries N-linked (GlcNAc...) asparagine glycosylation. N-linked (GlcNAc...) asparagine glycosylation is present at asparagine 119. A helical transmembrane segment spans residues 150-170 (VLLGLFLLLLLLLGSIILALL). Over 171–573 (QRKNYRVRGE…PQPACTLSPV (403 aa)) the chain is Cytoplasmic. Residues 203 to 518 (LCFSQVIREG…AHPQESHPFP (316 aa)) form the Protein kinase domain. ATP contacts are provided by residues 209–217 (IREGGHAVV) and lysine 230. Aspartate 333 serves as the catalytic Proton acceptor.

The protein belongs to the protein kinase superfamily. TKL Ser/Thr protein kinase family. TGFB receptor subfamily. In terms of assembly, interacts with type I receptor ACVR1. It depends on Mg(2+) as a cofactor. Mn(2+) is required as a cofactor.

It localises to the membrane. It carries out the reaction L-threonyl-[receptor-protein] + ATP = O-phospho-L-threonyl-[receptor-protein] + ADP + H(+). The catalysed reaction is L-seryl-[receptor-protein] + ATP = O-phospho-L-seryl-[receptor-protein] + ADP + H(+). Functionally, on ligand binding, forms a receptor complex consisting of two type II and two type I transmembrane serine/threonine kinases. Type II receptors phosphorylate and activate type I receptors which autophosphorylate, then bind and activate SMAD transcriptional regulators. Receptor for anti-Muellerian hormone. The sequence is that of Anti-Muellerian hormone type-2 receptor (AMHR2) from Homo sapiens (Human).